The following is a 64-amino-acid chain: Large ribosomal subunit protein uL30 (64 aa).

Belongs to the universal ribosomal protein uL30 family. As to quaternary structure, part of the 50S ribosomal subunit.

This chain is Large ribosomal subunit protein uL30, found in Rhodopseudomonas palustris (strain BisB18).